Here is a 153-residue protein sequence, read N- to C-terminus: MAVKIKLTRLGKIRNPQYRIVVADSRTRRNGRAIETIGKYHPKEEPSLIEVDSERAQYWLGVGAQPTEPVEAILKITGDWQKFKGLPGAEGTLRVKEAKPSKLELFQAALAQAENEPVGEAITPKKKKAKAEDAEAAADAPAEAAAESEAADK.

A disordered region spans residues 114–153; sequence ENEPVGEAITPKKKKAKAEDAEAAADAPAEAAAESEAADK. A compositionally biased stretch (low complexity) spans 137-153; sequence AADAPAEAAAESEAADK.

The protein belongs to the bacterial ribosomal protein bS16 family.

The sequence is that of Small ribosomal subunit protein bS16 from Rhodococcus jostii (strain RHA1).